The following is a 368-amino-acid chain: tRNA/tmRNA (uracil-C(5))-methyltransferase (368 aa).

Positions 192, 220, 225, 241, and 301 each coordinate S-adenosyl-L-methionine. The active-site Nucleophile is the Cys326. Glu360 serves as the catalytic Proton acceptor.

This sequence belongs to the class I-like SAM-binding methyltransferase superfamily. RNA M5U methyltransferase family. TrmA subfamily.

The enzyme catalyses uridine(54) in tRNA + S-adenosyl-L-methionine = 5-methyluridine(54) in tRNA + S-adenosyl-L-homocysteine + H(+). It catalyses the reaction uridine(341) in tmRNA + S-adenosyl-L-methionine = 5-methyluridine(341) in tmRNA + S-adenosyl-L-homocysteine + H(+). In terms of biological role, dual-specificity methyltransferase that catalyzes the formation of 5-methyluridine at position 54 (m5U54) in all tRNAs, and that of position 341 (m5U341) in tmRNA (transfer-mRNA). This chain is tRNA/tmRNA (uracil-C(5))-methyltransferase, found in Actinobacillus pleuropneumoniae serotype 3 (strain JL03).